A 47-amino-acid chain; its full sequence is Delta-actitoxin-Axm1g (47 aa).

Disulfide bonds link Cys4-Cys44, Cys6-Cys34, and Cys27-Cys45.

This sequence belongs to the sea anemone sodium channel inhibitory toxin family. Type I subfamily.

Its subcellular location is the secreted. It localises to the nematocyst. The sequence is that of Delta-actitoxin-Axm1g from Anthopleura xanthogrammica (Giant green sea anemone).